The chain runs to 550 residues: Arginine--tRNA ligase (550 aa).

Residues 130-140 carry the 'HIGH' region motif; it reads ANPTGPIHLGG.

The protein belongs to the class-I aminoacyl-tRNA synthetase family. As to quaternary structure, monomer.

The protein resides in the cytoplasm. The enzyme catalyses tRNA(Arg) + L-arginine + ATP = L-arginyl-tRNA(Arg) + AMP + diphosphate. This is Arginine--tRNA ligase from Corynebacterium glutamicum (strain R).